Here is a 746-residue protein sequence, read N- to C-terminus: MLGDSRDLFRPKTSDIPAKPGVYKWRDGEGRVIYVGKAKNLRNRLTNYFQPLYLLHPRTQTMVLTARSLEWTVVATELESLTLEYTWIKEFDPRFNVQFRDDKTYPYLAVSTGERIPRVWVTRSRKRRDTRYFGPYAKVWELRHSLDRLLRTFPVRTCTTNVFHKAQLTGRPCLFASIGKCSAPCVNRIEADEHRRLCEQLVGVMTGRLGRPYIAQLTRDMKEASAELEFEKAARLRDQIQMLETVVQQNAVVFDQDVDADVFGFASDELEASVHAFYVRAGSIRGERNWSVERVEDIDDADLMADLLVQVYSDAAGDNHPQSAATISTNREAIGSTQTITATDAVARAQATRERNTRQETTGRADLLAPIAPVPREIIVPVEPARREELEGWLTNLRGGAVTIRVASRGDKKQLMDRANENASQALQRSKMSRISDMGARTQAMNDVAKALGLAEAPLRIECYDISNTVGGAFQVASMVVFEDAIAKKSEYRRFAIRGKDGKGAVDDLSALYETLTRRFKHGNIAGDSGESIDAEQRVASAAGKMTTAVAAETIAANGNDNGEGGSDISGKGHAVPVGVQNDARESPPDIVQQNTNRHHFAYKPNLVVVDGGKPQVMAAAKALEDCGVNDVAVCGLAKRLEEVWVPDDDYPIILKRQSEGMYLLQRVRDESHRFAITYHRQQRRKGALRSALDEIPGIGESYQKRLLNHFGSVKAMREASVEDFEKVKGIGHAKAEALYNALHEQ.

The 80-residue stretch at Ala-18–Val-97 folds into the GIY-YIG domain. The region spanning Arg-211 to Val-246 is the UVR domain. The tract at residues Ala-557–Pro-577 is disordered.

This sequence belongs to the UvrC family. As to quaternary structure, interacts with UvrB in an incision complex.

Its subcellular location is the cytoplasm. Its function is as follows. The UvrABC repair system catalyzes the recognition and processing of DNA lesions. UvrC both incises the 5' and 3' sides of the lesion. The N-terminal half is responsible for the 3' incision and the C-terminal half is responsible for the 5' incision. In Bifidobacterium longum (strain NCC 2705), this protein is UvrABC system protein C.